The primary structure comprises 189 residues: Chitin synthase 3 (189 aa).

Belongs to the chitin synthase family. Class II subfamily.

Its subcellular location is the cell membrane. It catalyses the reaction [(1-&gt;4)-N-acetyl-beta-D-glucosaminyl](n) + UDP-N-acetyl-alpha-D-glucosamine = [(1-&gt;4)-N-acetyl-beta-D-glucosaminyl](n+1) + UDP + H(+). Its function is as follows. Polymerizes chitin, a structural polymer of the cell wall and septum, by transferring the sugar moiety of UDP-GlcNAc to the non-reducing end of the growing chitin polymer. This chain is Chitin synthase 3 (CHS3), found in Ajellomyces capsulatus (Darling's disease fungus).